Reading from the N-terminus, the 439-residue chain is Putative phosphatidate cytidylyltransferase (439 aa).

Positions 1–37 are disordered; that stretch reads MARKRTNKRNNSDKENGNVGVVQNKDSASSKTTEPAR. A Phosphoserine modification is found at serine 12. Polar residues predominate over residues 24-33; sequence NKDSASSKTT. The next 7 membrane-spanning stretches (helical) occupy residues 52 to 71, 76 to 98, 110 to 130, 145 to 165, 180 to 199, 245 to 265, and 321 to 341; these read FITR…TALA, WVVL…IASV, FINW…SIYA, LVLH…VLFV, FCWT…FMIN, GFLG…YVLM, and FHLA…GFFA.

The protein belongs to the CDS family. Mg(2+) is required as a cofactor.

The protein localises to the endoplasmic reticulum membrane. It carries out the reaction a 1,2-diacyl-sn-glycero-3-phosphate + CTP + H(+) = a CDP-1,2-diacyl-sn-glycerol + diphosphate. It functions in the pathway phospholipid metabolism; CDP-diacylglycerol biosynthesis; CDP-diacylglycerol from sn-glycerol 3-phosphate: step 3/3. Its function is as follows. Supplies CDP-diacylglycerol, which may play an important role as both a precursor to phosphoinositide biosynthesis in the plasma membrane and as a negative effector of phosphatidylinositol 4-kinase activity, thereby exerting an effect on cell proliferation via a lipid-dependent signal transduction cascade. The polypeptide is Putative phosphatidate cytidylyltransferase (Schizosaccharomyces pombe (strain 972 / ATCC 24843) (Fission yeast)).